We begin with the raw amino-acid sequence, 101 residues long: MNLSLREVQKLLITVAADVARRRLARGLKLNYSEAVALITDHVMEGARDGKLVADLMQSAREVLRVDQVMEGVDTMVSIIQVEVTFPDGTKLVSVHDPIYK.

It belongs to the urease gamma subunit family. As to quaternary structure, heterotrimer of UreA (gamma), UreB (beta) and UreC (alpha) subunits. Three heterotrimers associate to form the active enzyme.

It localises to the cytoplasm. It catalyses the reaction urea + 2 H2O + H(+) = hydrogencarbonate + 2 NH4(+). It functions in the pathway nitrogen metabolism; urea degradation; CO(2) and NH(3) from urea (urease route): step 1/1. In Ureaplasma parvum serovar 3 (strain ATCC 27815 / 27 / NCTC 11736), this protein is Urease subunit gamma.